Here is a 444-residue protein sequence, read N- to C-terminus: Adiponectin receptor protein (444 aa).

Polar residues predominate over residues 1–13 (MDSATNLLEQQGS). Residues 1-24 (MDSATNLLEQQGSAADVSGGSHPA) form a disordered region. The Cytoplasmic segment spans residues 1–204 (MDSATNLLEQ…KSIFRVHTET (204 aa)). The chain crosses the membrane as a helical span at residues 205–225 (GNIWTHLLGCIAFIGVALYFI). Topologically, residues 226-237 (SRPSVEIQTQEK) are extracellular. A helical membrane pass occupies residues 238-258 (IVFGAFFIGAIVCLGFSFAFH). Histidine 258 contacts Zn(2+). Residues 259–276 (TLSCHSVEMGRLFSKLDY) are Cytoplasmic-facing. A helical membrane pass occupies residues 277-297 (CGIALLIMGSFVPWLYYGFYC). Over 298–302 (HYQPK) the chain is Extracellular. A helical transmembrane segment spans residues 303-323 (VIYLSVVSILGILSIVVSLWD). Residues 324–334 (KFSEPALRPLR) lie on the Cytoplasmic side of the membrane. A helical transmembrane segment spans residues 335-355 (AGVFMSFGLSGVIPAIHYSIM). The Extracellular portion of the chain corresponds to 356–365 (EGWFSQMSRA). The helical transmembrane segment at 366–386 (SLGWLILMGLLYILGALLYAL) threads the bilayer. Residues 387-405 (RVPERWFPGKFDIWGQSHQ) lie on the Cytoplasmic side of the membrane. 2 residues coordinate Zn(2+): histidine 404 and histidine 408. The chain crosses the membrane as a helical span at residues 406–426 (IFHILVIAAAFVHYHGISEMA). Topologically, residues 427–444 (MYRVMYSECTVPIEPITF) are extracellular.

The protein belongs to the ADIPOR family. In terms of tissue distribution, in larval and adult brain, expressed in insulin-producing cells and in neurons of the subesophageal region. Also expressed in lateral neurons of the adult brain (at protein level). In third instar larvae, expressed in central nervous system (CNS), imaginal disk, salivary gland, fat body, gut and malphigian tubules.

The protein localises to the cell membrane. Functionally, adiponectin receptor. In insulin-producing cells, regulates insulin secretion and controls glucose and lipid metabolism. This chain is Adiponectin receptor protein (AdipoR), found in Drosophila melanogaster (Fruit fly).